The sequence spans 405 residues: Protochlorophyllide reductase A, chloroplastic (405 aa).

Residues 1–69 (MALQAASLVS…LRNNKAIIRA (69 aa)) constitute a chloroplast transit peptide.

It belongs to the short-chain dehydrogenases/reductases (SDR) family. POR subfamily. In terms of assembly, forms large complexes including TOC33, pPORA and OEP161 during pPORA import into plastids at the plastid envelope membrane. Interacts with CPP1 during plastid import. In terms of tissue distribution, expressed in young seedlings. Not detected in leaves.

The protein resides in the plastid. Its subcellular location is the chloroplast. It carries out the reaction chlorophyllide a + NADP(+) = protochlorophyllide a + NADPH + H(+). The protein operates within porphyrin-containing compound metabolism; chlorophyll biosynthesis. Phototransformation of protochlorophyllide (Pchlide) to chlorophyllide (Chlide). PORA may also function as a photoprotectant during the transitory stage from dark to light. Functions in skotomorphogenesis, photomorphogenesis and throughout the plant life under specific light conditions. This is Protochlorophyllide reductase A, chloroplastic (PORA) from Arabidopsis thaliana (Mouse-ear cress).